An 805-amino-acid chain; its full sequence is Transmembrane channel-like protein 6 (805 aa).

The tract at residues 1-29 is disordered; it reads MAQPLAFILDVPETPGDQGQGPSPYDESE. At 1–209 the chain is on the lumenal side; that stretch reads MAQPLAFILD…SCCGRLRYAC (209 aa). The residue at position 89 (T89) is a Phosphothreonine. R94 carries the omega-N-methylarginine modification. An N-linked (GlcNAc...) asparagine glycan is attached at N103. The residue at position 105 (T105) is a Phosphothreonine. The helical transmembrane segment at 210-230 threads the bilayer; it reads VLALHSLGLALLSALQALMPW. The Cytoplasmic segment spans residues 231-249; sequence RYALKRIGGQFGSSVLSYF. The chain crosses the membrane as a helical span at residues 250-270; the sequence is LFLKTLLAFNALLLLLLVAFI. Residues 271–338 are Lumenal-facing; the sequence is MGPQVAFPPA…TPRVGGLPYN (68 aa). N-linked (GlcNAc...) asparagine glycosylation is present at N312. The chain crosses the membrane as a helical span at residues 339-359; sequence MPLAYLSTVGVSFFITCITLV. Residues 360–431 lie on the Cytoplasmic side of the membrane; sequence YSMAHSFGES…RSVCGRLRQA (72 aa). Residues 432–452 form a helical membrane-spanning segment; it reads AVLGLVWLLCLGTALGCAVAV. The Lumenal portion of the chain corresponds to 453–469; sequence HVFSEFMIQSPEAAGQE. A helical membrane pass occupies residues 470-490; the sequence is AVLLVLPLVVGLLNLGAPYLC. Topologically, residues 491 to 505 are cytoplasmic; sequence RVLAALEPHDSPVLE. A helical membrane pass occupies residues 506–526; the sequence is VYVAICRNLILKLAILGTLCY. The Lumenal segment spans residues 527-553; that stretch reads HWLGRRVGVLQGQCWEDFVGQELYRFL. The helical transmembrane segment at 554–574 threads the bilayer; sequence VMDFVLMLLDTLFGELVWRII. At 575 to 604 the chain is on the cytoplasmic side; sequence SEKKLKRRRKPEFDIARNVLELIYGQTLTW. The helical transmembrane segment at 605 to 625 threads the bilayer; that stretch reads LGVLFSPLLPAVQIIKLLLVF. Residues 626-650 lie on the Lumenal side of the membrane; the sequence is YVKKTSLLANCQAPRRPWLASHMST. The helical transmembrane segment at 651 to 671 threads the bilayer; it reads VFLTLLCFPAFLGAAVFLCYA. Residues 672 to 722 lie on the Cytoplasmic side of the membrane; the sequence is VWQVKPSSTCGPFRTLDTMYEAGRVWVRHLEAAGPRVSWLPWVHRYLMENT. The chain crosses the membrane as a helical span at residues 723-743; sequence FFVFLVSALLLAVIYLNIQVV. Topologically, residues 744-805 are lumenal; the sequence is RGQRKVICLL…PALLTDEQDA (62 aa). Positions 778-805 are disordered; the sequence is KEREERSRVGTTEEAAAPPALLTDEQDA.

The protein belongs to the TMC family. Interacts with TMC8. Interacts and forms a complex with TMC8 and CIB1; the interaction stabilizes each component of the complex. Interacts and forms a complex with TMC8 and SLC30A1/ZNT1; the interaction regulates zinc transport into the ER. In terms of assembly, (Microbial infection) Interacts with human papillomavirus 16/HPV16 protein E5; the interaction alleviates TMC6-mediated transcription factors inhibition. In terms of tissue distribution, expressed in placenta, prostate, testis, activated T-lymphocytes and lymphokine-activated killer (LAK) lymphocytes.

It localises to the endoplasmic reticulum membrane. The protein localises to the golgi apparatus membrane. Its subcellular location is the nucleus membrane. Acts as a regulatory protein involved in the regulation of numerous cellular processes. Together with its homolog TMC8/EVER2, forms a complex with CIB1 in lymphocytes and keratynocytes where TMC6 and TMC8 stabilize CIB1 and reciprocally. Together with TMC8, also forms a complex with and activates zinc transporter ZNT1 at the ER membrane of keratynocytes, thereby facilitating zinc uptake into the ER. Down-regulates the activity of transcription factors induced by zinc and cytokines. Also plays a role in thermal sensation by inhibiting the M-channel (KCNQ2-KCNQ3 channel) current in primary sensory neurons. This Homo sapiens (Human) protein is Transmembrane channel-like protein 6.